Reading from the N-terminus, the 179-residue chain is ATP synthase subunit delta (179 aa).

This sequence belongs to the ATPase delta chain family. F-type ATPases have 2 components, F(1) - the catalytic core - and F(0) - the membrane proton channel. F(1) has five subunits: alpha(3), beta(3), gamma(1), delta(1), epsilon(1). F(0) has three main subunits: a(1), b(2) and c(10-14). The alpha and beta chains form an alternating ring which encloses part of the gamma chain. F(1) is attached to F(0) by a central stalk formed by the gamma and epsilon chains, while a peripheral stalk is formed by the delta and b chains.

Its subcellular location is the cell membrane. Its function is as follows. F(1)F(0) ATP synthase produces ATP from ADP in the presence of a proton or sodium gradient. F-type ATPases consist of two structural domains, F(1) containing the extramembraneous catalytic core and F(0) containing the membrane proton channel, linked together by a central stalk and a peripheral stalk. During catalysis, ATP synthesis in the catalytic domain of F(1) is coupled via a rotary mechanism of the central stalk subunits to proton translocation. This protein is part of the stalk that links CF(0) to CF(1). It either transmits conformational changes from CF(0) to CF(1) or is implicated in proton conduction. In Natranaerobius thermophilus (strain ATCC BAA-1301 / DSM 18059 / JW/NM-WN-LF), this protein is ATP synthase subunit delta.